The primary structure comprises 71 residues: UPF0346 protein BCE_2336 (71 aa).

The protein belongs to the UPF0346 family.

This Bacillus cereus (strain ATCC 10987 / NRS 248) protein is UPF0346 protein BCE_2336.